We begin with the raw amino-acid sequence, 449 residues long: Tubulin alpha-8 chain (449 aa).

An MREC motif motif is present at residues 1-4 (MREC). Positions 11, 71, 140, 144, 145, 179, 206, and 228 each coordinate GTP. Glutamate 71 contacts Mg(2+). Glutamate 254 is a catalytic residue.

This sequence belongs to the tubulin family. Dimer of alpha and beta chains. A typical microtubule is a hollow water-filled tube with an outer diameter of 25 nm and an inner diameter of 15 nM. Alpha-beta heterodimers associate head-to-tail to form protofilaments running lengthwise along the microtubule wall with the beta-tubulin subunit facing the microtubule plus end conferring a structural polarity. Microtubules usually have 13 protofilaments but different protofilament numbers can be found in some organisms and specialized cells. Mg(2+) is required as a cofactor. Some glutamate residues at the C-terminus are polyglycylated, resulting in polyglycine chains on the gamma-carboxyl group. Glycylation is mainly limited to tubulin incorporated into axonemes (cilia and flagella) whereas glutamylation is prevalent in neuronal cells, centrioles, axonemes, and the mitotic spindle. Both modifications can coexist on the same protein on adjacent residues, and lowering polyglycylation levels increases polyglutamylation, and reciprocally. Cilia and flagella glycylation is required for their stability and maintenance. Flagella glycylation controls sperm motility. In terms of processing, some glutamate residues at the C-terminus are polyglutamylated, resulting in polyglutamate chains on the gamma-carboxyl group. Polyglutamylation plays a key role in microtubule severing by spastin (SPAST). SPAST preferentially recognizes and acts on microtubules decorated with short polyglutamate tails: severing activity by SPAST increases as the number of glutamates per tubulin rises from one to eight, but decreases beyond this glutamylation threshold. Glutamylation is also involved in cilia motility. Post-translationally, the C-terminal phenylalanine residue is cleaved by MATCAP1/KIAA0895L.

The protein localises to the cytoplasm. It is found in the cytoskeleton. The enzyme catalyses GTP + H2O = GDP + phosphate + H(+). Its function is as follows. Tubulin is the major constituent of microtubules, a cylinder consisting of laterally associated linear protofilaments composed of alpha- and beta-tubulin heterodimers. Microtubules grow by the addition of GTP-tubulin dimers to the microtubule end, where a stabilizing cap forms. Below the cap, tubulin dimers are in GDP-bound state, owing to GTPase activity of alpha-tubulin. This chain is Tubulin alpha-8 chain (TUBA8), found in Bos taurus (Bovine).